The chain runs to 460 residues: RING finger protein DG17 (460 aa).

The RING-type zinc finger occupies 27–67; the sequence is CPICFEFIYKKQIYQCKSGHHACKECWEKSLETKKECMTCK. TRAF-type zinc fingers lie at residues 141–194 and 196–253; these read SHLI…KKEL and THYK…SELQ. Positions 269–294 form a coiled coil; it reads IEKLTNQVGQSKKTHDELLKKIEDLS. Positions 320–448 constitute an MATH domain; sequence GYRNKWIISN…DDKLIIEIYI (129 aa).

The protein belongs to the TNF receptor-associated factor family. A subfamily.

Its subcellular location is the cytoplasm. Functionally, probable adapter protein and signal transducer that links members of the tumor necrosis factor receptor family to different signaling pathways by association with the receptor cytoplasmic domain and kinases. This is RING finger protein DG17 (zfaA) from Dictyostelium discoideum (Social amoeba).